A 1533-amino-acid polypeptide reads, in one-letter code: Glycogen debranching enzyme (1533 aa).

Phosphoserine is present on Ser-64. Residues Asp-527, His-530, and Asp-628 contribute to the active site.

This sequence belongs to the glycogen debranching enzyme family. Monomer. Interacts with NHLRC1/malin. In terms of processing, ubiquitinated.

The protein resides in the cytoplasm. It carries out the reaction Transfers a segment of a (1-&gt;4)-alpha-D-glucan to a new position in an acceptor, which may be glucose or a (1-&gt;4)-alpha-D-glucan.. It catalyses the reaction Hydrolysis of (1-&gt;6)-alpha-D-glucosidic branch linkages in glycogen phosphorylase limit dextrin.. Functionally, multifunctional enzyme acting as 1,4-alpha-D-glucan:1,4-alpha-D-glucan 4-alpha-D-glycosyltransferase and amylo-1,6-glucosidase in glycogen degradation. The sequence is that of Glycogen debranching enzyme (AGL) from Canis lupus familiaris (Dog).